The sequence spans 87 residues: Small ribosomal subunit protein bS20 (87 aa).

Basic residues predominate over residues 1–11 (MANHKSALKRI). Positions 1-23 (MANHKSALKRIKQTEKRTERNRH) are disordered.

The protein belongs to the bacterial ribosomal protein bS20 family.

Its function is as follows. Binds directly to 16S ribosomal RNA. The chain is Small ribosomal subunit protein bS20 from Geotalea daltonii (strain DSM 22248 / JCM 15807 / FRC-32) (Geobacter daltonii).